Reading from the N-terminus, the 379-residue chain is PqqA peptide cyclase (379 aa).

Residues 8-220 (LPAPIGLLAE…IRVVEEARER (213 aa)) form the Radical SAM core domain. Positions 22, 26, and 29 each coordinate [4Fe-4S] cluster.

Belongs to the radical SAM superfamily. PqqE family. Interacts with PqqD. The interaction is necessary for activity of PqqE. [4Fe-4S] cluster is required as a cofactor.

The catalysed reaction is [PQQ precursor protein] + S-adenosyl-L-methionine = E-Y cross-linked-[PQQ precursor protein] + 5'-deoxyadenosine + L-methionine + H(+). It participates in cofactor biosynthesis; pyrroloquinoline quinone biosynthesis. Catalyzes the cross-linking of a glutamate residue and a tyrosine residue in the PqqA protein as part of the biosynthesis of pyrroloquinoline quinone (PQQ). The protein is PqqA peptide cyclase of Methylobacterium sp. (strain 4-46).